The primary structure comprises 155 residues: Nucleosome assembly protein 1-like 5 (155 aa).

Basic and acidic residues predominate over residues 1–16 (MADPEKQGPAESRAED). The segment at 1–60 (MADPEKQGPAESRAEDEVMEGAQGGEDAATGDSATAPAAEEPQAPAENAPKPKNDFIESL) is disordered. The span at 27 to 49 (DAATGDSATAPAAEEPQAPAENA) shows a compositional bias: low complexity. Positions 68–94 (VLALKKLQKRCDKIEAKFDKEFQALEK) form a coiled coil. The interval 119-155 (WTLEGEDDEDDEEEEDEEEEEEEAAAGATGGPDSAEK) is disordered. Over residues 122–142 (EGEDDEDDEEEEDEEEEEEEA) the composition is skewed to acidic residues.

The protein belongs to the nucleosome assembly protein (NAP) family.

The protein localises to the nucleus. The polypeptide is Nucleosome assembly protein 1-like 5 (Nap1l5) (Rattus norvegicus (Rat)).